The following is a 143-amino-acid chain: Ribonuclease H (143 aa).

Positions Met1–Glu140 constitute an RNase H type-1 domain. Residues Asp8, Glu46, Asp68, and Asp132 each contribute to the Mg(2+) site.

It belongs to the RNase H family. Monomer. Mg(2+) is required as a cofactor.

It is found in the cytoplasm. The enzyme catalyses Endonucleolytic cleavage to 5'-phosphomonoester.. Endonuclease that specifically degrades the RNA of RNA-DNA hybrids. The protein is Ribonuclease H of Legionella pneumophila (strain Lens).